A 333-amino-acid polypeptide reads, in one-letter code: Acetoin:2,6-dichlorophenolindophenol oxidoreductase subunit alpha (333 aa).

In terms of assembly, tetramer of 2 alpha and 2 beta subunits. The cofactor is thiamine diphosphate.

It participates in ketone degradation; acetoin degradation. In terms of biological role, catalyzes the 2,6-dichlorophenolindophenol-dependent cleavage of acetoin into acetate and acetaldehyde. The alpha subunit is probably the catalytic subunit of the enzyme. The sequence is that of Acetoin:2,6-dichlorophenolindophenol oxidoreductase subunit alpha (acoA) from Bacillus subtilis (strain 168).